The sequence spans 607 residues: Granule-bound starch synthase 1, chloroplastic/amyloplastic (607 aa).

Residues 1–77 (MASITASHHF…RPGCSATIVC (77 aa)) constitute a chloroplast transit peptide. Position 95 (K95) interacts with ADP-alpha-D-glucose. The disordered stretch occupies residues 585–607 (SGSEPGVEGEEIAPLAKENVATP).

This sequence belongs to the glycosyltransferase 1 family. Bacterial/plant glycogen synthase subfamily.

Its subcellular location is the plastid. It localises to the chloroplast. The protein resides in the amyloplast. The catalysed reaction is an NDP-alpha-D-glucose + [(1-&gt;4)-alpha-D-glucosyl](n) = [(1-&gt;4)-alpha-D-glucosyl](n+1) + a ribonucleoside 5'-diphosphate + H(+). It functions in the pathway glycan biosynthesis; starch biosynthesis. This chain is Granule-bound starch synthase 1, chloroplastic/amyloplastic (WAXY), found in Solanum tuberosum (Potato).